The sequence spans 430 residues: Glutamate-1-semialdehyde 2,1-aminomutase (430 aa).

K266 bears the N6-(pyridoxal phosphate)lysine mark.

The protein belongs to the class-III pyridoxal-phosphate-dependent aminotransferase family. HemL subfamily. As to quaternary structure, homodimer. Pyridoxal 5'-phosphate serves as cofactor.

The protein resides in the cytoplasm. It catalyses the reaction (S)-4-amino-5-oxopentanoate = 5-aminolevulinate. The protein operates within porphyrin-containing compound metabolism; protoporphyrin-IX biosynthesis; 5-aminolevulinate from L-glutamyl-tRNA(Glu): step 2/2. This is Glutamate-1-semialdehyde 2,1-aminomutase from Acidithiobacillus ferrooxidans (strain ATCC 23270 / DSM 14882 / CIP 104768 / NCIMB 8455) (Ferrobacillus ferrooxidans (strain ATCC 23270)).